Reading from the N-terminus, the 465-residue chain is Sushi repeat-containing protein SRPX2 (465 aa).

Residues 1–23 form the signal peptide; it reads MAIQLTRRGALSLLLFLTPAVMP. 3 Sushi domains span residues 69–119, 120–178, and 262–321; these read ATCY…YCRQ, MRCH…VCVD, and RRCP…VCVP. 4 cysteine pairs are disulfide-bonded: C71-C105, C91-C117, C122-C163, and C149-C176. The region spanning 177–261 is the HYR domain; that stretch reads VDIDPPKIRC…SCKFIVKVQV (85 aa). Intrachain disulfides connect C264-C306 and C292-C319.

As to quaternary structure, forms homooligomers. Interacts with PLAUR (via the UPAR/Ly6 domains), ADAMTS4 and CTSB. Interacts with HGF; the interaction increases the mitogenic activity of HGF. Post-translationally, contains chondroitin sulfate chains.

The protein localises to the secreted. The protein resides in the cytoplasm. Its subcellular location is the cell surface. It is found in the synapse. Functionally, acts as a ligand for the urokinase plasminogen activator surface receptor. Plays a role in angiogenesis by inducing endothelial cell migration and the formation of vascular network (cords). Involved in cellular migration and adhesion. Increases the phosphorylation levels of FAK. Interacts with and increases the mitogenic activity of HGF. Promotes synapse formation. This Bos taurus (Bovine) protein is Sushi repeat-containing protein SRPX2 (SRPX2).